The chain runs to 273 residues: Proteasome subunit beta type-10 (273 aa).

N-acetylmethionine is present on methionine 1. The propeptide at 1 to 39 (MLKPALEPRGGFSFENCQRNASLERVLPGLKVPHARKTG) is removed in mature form. Threonine 40 functions as the Nucleophile in the catalytic mechanism. Serine 230 bears the Phosphoserine mark.

Belongs to the peptidase T1B family. The 26S proteasome consists of a 20S proteasome core and two 19S regulatory subunits. The 20S proteasome core is composed of 28 subunits that are arranged in four stacked rings, resulting in a barrel-shaped structure. The two end rings are each formed by seven alpha subunits, and the two central rings are each formed by seven beta subunits. The catalytic chamber with the active sites is on the inside of the barrel. Component of the immunoproteasome, where it displaces the equivalent housekeeping subunit PSMB7. Component of the spermatoproteasome, a form of the proteasome specifically found in testis. As to quaternary structure, (Microbial infection) Interacts with HIV-1 TAT protein. Post-translationally, autocleaved. The resulting N-terminal Thr residue of the mature subunit is responsible for the nucleophile proteolytic activity.

Its subcellular location is the cytoplasm. It localises to the nucleus. The enzyme catalyses Cleavage of peptide bonds with very broad specificity.. Its function is as follows. The proteasome is a multicatalytic proteinase complex which is characterized by its ability to cleave peptides with Arg, Phe, Tyr, Leu, and Glu adjacent to the leaving group at neutral or slightly basic pH. The proteasome has an ATP-dependent proteolytic activity. This subunit is involved in antigen processing to generate class I binding peptides. This chain is Proteasome subunit beta type-10 (PSMB10), found in Homo sapiens (Human).